We begin with the raw amino-acid sequence, 325 residues long: Malate dehydrogenase (325 aa).

9–15 (GAAGAIG) is an NAD(+) binding site. Residues Arg-90 and Arg-96 each contribute to the substrate site. Residues Asn-103, Gln-110, and 127 to 129 (VGN) each bind NAD(+). Substrate is bound by residues Asn-129 and Arg-160. Catalysis depends on His-185, which acts as the Proton acceptor.

Belongs to the LDH/MDH superfamily. MDH type 2 family.

It carries out the reaction (S)-malate + NAD(+) = oxaloacetate + NADH + H(+). Functionally, catalyzes the reversible oxidation of malate to oxaloacetate. The chain is Malate dehydrogenase from Rubrobacter xylanophilus (strain DSM 9941 / JCM 11954 / NBRC 16129 / PRD-1).